The sequence spans 147 residues: uncharacterized protein (147 aa).

One can recognise an HTH LytTR-type domain in the interval 44 to 147; that stretch reads LVGYIDKEIH…LKSIKERLSI (104 aa).

The protein resides in the cytoplasm. This is an uncharacterized protein from Staphylococcus aureus (strain MRSA252).